Consider the following 178-residue polypeptide: ATP-dependent protease subunit HslV (178 aa).

Residue Thr-7 is part of the active site. Residues Gly-162, Cys-165, and Thr-168 each contribute to the Na(+) site.

The protein belongs to the peptidase T1B family. HslV subfamily. As to quaternary structure, a double ring-shaped homohexamer of HslV is capped on each side by a ring-shaped HslU homohexamer. The assembly of the HslU/HslV complex is dependent on binding of ATP.

It is found in the cytoplasm. The catalysed reaction is ATP-dependent cleavage of peptide bonds with broad specificity.. Allosterically activated by HslU binding. Its function is as follows. Protease subunit of a proteasome-like degradation complex believed to be a general protein degrading machinery. The sequence is that of ATP-dependent protease subunit HslV from Cupriavidus taiwanensis (strain DSM 17343 / BCRC 17206 / CCUG 44338 / CIP 107171 / LMG 19424 / R1) (Ralstonia taiwanensis (strain LMG 19424)).